The chain runs to 340 residues: Protein B17 (340 aa).

This sequence belongs to the orthopoxvirus B17 protein family.

This is Protein B17 from Variola virus (isolate Human/India/Ind3/1967) (VARV).